A 776-amino-acid chain; its full sequence is Probable E3 ubiquitin-protein ligase HECTD2 (776 aa).

The tract at residues 1–46 is disordered; that stretch reads MSEAVRVPSPATPLVVAAPAPEERKGKESEREKLPPIVSAGAGATA. Positions 7–20 are enriched in low complexity; that stretch reads VPSPATPLVVAAPA. A Phosphoserine modification is found at serine 9. A compositionally biased stretch (basic and acidic residues) spans 21 to 34; sequence PEERKGKESEREKL. Residues 437-776 form the HECT domain; that stretch reads KRADLKKKLK…ISNSEGFGLE (340 aa). The Glycyl thioester intermediate role is filled by cysteine 744.

It catalyses the reaction S-ubiquitinyl-[E2 ubiquitin-conjugating enzyme]-L-cysteine + [acceptor protein]-L-lysine = [E2 ubiquitin-conjugating enzyme]-L-cysteine + N(6)-ubiquitinyl-[acceptor protein]-L-lysine.. It functions in the pathway protein modification; protein ubiquitination. In terms of biological role, E3 ubiquitin-protein ligase which accepts ubiquitin from an E2 ubiquitin-conjugating enzyme in the form of a thioester and then directly transfers the ubiquitin to targeted substrates. Its function is as follows. (Microbial infection) Catalyzes ubiquitination of Botulinum neurotoxin A light chain (LC) of C.botulinum neurotoxin type A (BoNT/A). The polypeptide is Probable E3 ubiquitin-protein ligase HECTD2 (Homo sapiens (Human)).